We begin with the raw amino-acid sequence, 283 residues long: Myeloid differentiation primary response protein MyD88-A (283 aa).

The Death domain occupies 27-105; sequence RLCLYLNPDA…DILTDLGPLI (79 aa). Residues 106–143 are intermediate domain; sequence EADCMKYLEKKHVPLPIQDDKVDSSEQYRITKSDDPYG. Residues 147 to 281 form the TIR domain; it reads ETFDAFICYC…WFWDKLAKAL (135 aa).

The protein resides in the cytoplasm. Its function is as follows. Adapter protein involved in the Toll-like receptor and IL-1 receptor signaling pathway in the innate immune response. Activates expression of target genes in the Spemann organizer region during early embryonic development. Is required for normal axis formation. This chain is Myeloid differentiation primary response protein MyD88-A (myd88-a), found in Xenopus laevis (African clawed frog).